Here is a 746-residue protein sequence, read N- to C-terminus: Quiannulatene synthase (746 aa).

Residues 1–336 (MASEVIVISD…SRYPTKTELN (336 aa)) are sesterterpenoid synthase. Position 95 (aspartate 95) interacts with Mg(2+). Positions 338–746 (PEVIIVDGEL…VELMLRRLWV (409 aa)) are geranylfarnesyl diphosphate synthase. Positions 465, 468, and 497 each coordinate isopentenyl diphosphate. Mg(2+) is bound by residues aspartate 504 and aspartate 508. Arginine 513 provides a ligand contact to dimethylallyl diphosphate. Arginine 514 lines the isopentenyl diphosphate pocket. Lysine 591, threonine 592, glutamine 628, asparagine 635, and lysine 645 together coordinate dimethylallyl diphosphate.

It in the N-terminal section; belongs to the terpene synthase family. The protein in the C-terminal section; belongs to the FPP/GGPP synthase family. Requires Mg(2+) as cofactor.

It catalyses the reaction isopentenyl diphosphate + (2E,6E)-farnesyl diphosphate = (2E,6E,10E)-geranylgeranyl diphosphate + diphosphate. The catalysed reaction is (2E,6E,10E,14E)-geranylfarnesyl diphosphate = quiannulatene + diphosphate. It participates in secondary metabolite biosynthesis; terpenoid biosynthesis. Functionally, bifunctional sesterterpene synthase; part of the gene cluster that mediates the biosynthesis of the pentacyclic sesterterpene quiannulatic acid. The first step of the pathway is performed by the sesterterpene synthase (QS) that possesses both prenyl transferase and terpene cyclase activity, converting isopentenyl diphosphate and dimethylallyl diphosphate into geranylfarnesyl diphosphate (GFPP) and further converting GFPP into quiannulatene via an unprecedented cyclization mode which involves three rounds of hydride shifts and two successive C-C bond migrations to construct the 5-6-5-5-5 fused ring. The cytochrome P450 monooxygenase Qnn-P450 then oxidizes quiannulatene at C-19 in 3 successive reactions to afford quiannulatic acid. The sequence is that of Quiannulatene synthase from Emericella variicolor (Aspergillus stellatus).